We begin with the raw amino-acid sequence, 127 residues long: MYRTMMKAKLHRARVTESNLNYVGSITIDEDLMDAVDLLENEKVQIVNNNNGERFETYVIKGPRGEGGICLNGAAARKVQPGDVVIILSYAMMENAEALAHQPKVAILDENNRIVEMLGTEPASTVR.

S25 (schiff-base intermediate with substrate; via pyruvic acid) is an active-site residue. S25 is modified (pyruvic acid (Ser)). T57 is a substrate binding site. The Proton donor role is filled by Y58. 73-75 (GAA) contacts substrate.

Belongs to the PanD family. In terms of assembly, heterooctamer of four alpha and four beta subunits. Pyruvate is required as a cofactor. In terms of processing, is synthesized initially as an inactive proenzyme, which is activated by self-cleavage at a specific serine bond to produce a beta-subunit with a hydroxyl group at its C-terminus and an alpha-subunit with a pyruvoyl group at its N-terminus.

Its subcellular location is the cytoplasm. The catalysed reaction is L-aspartate + H(+) = beta-alanine + CO2. It functions in the pathway cofactor biosynthesis; (R)-pantothenate biosynthesis; beta-alanine from L-aspartate: step 1/1. In terms of biological role, catalyzes the pyruvoyl-dependent decarboxylation of aspartate to produce beta-alanine. The chain is Aspartate 1-decarboxylase from Shouchella clausii (strain KSM-K16) (Alkalihalobacillus clausii).